A 110-amino-acid chain; its full sequence is METIAKHRYARTSAQKARLVADLIRGKKVAQALEILTFTNKKAAALVKKVLESAIANAEHNDGADIDDLKVAKIFVDEGPSMKRVMPRAKGRADRILKRTSHITVVVSDR.

This sequence belongs to the universal ribosomal protein uL22 family. Part of the 50S ribosomal subunit.

Functionally, this protein binds specifically to 23S rRNA; its binding is stimulated by other ribosomal proteins, e.g. L4, L17, and L20. It is important during the early stages of 50S assembly. It makes multiple contacts with different domains of the 23S rRNA in the assembled 50S subunit and ribosome. The globular domain of the protein is located near the polypeptide exit tunnel on the outside of the subunit, while an extended beta-hairpin is found that lines the wall of the exit tunnel in the center of the 70S ribosome. This Haemophilus influenzae (strain 86-028NP) protein is Large ribosomal subunit protein uL22.